We begin with the raw amino-acid sequence, 544 residues long: Protein RDR1 (544 aa).

Positions 14–40 form a DNA-binding region, zn(2)-C6 fungal-type; that stretch reads CETCRELKRKCDGNQPCGACVRFEYDC. Residues 50-71 are disordered; that stretch reads KRRKTVEQDKEAPLPSPPVHVD.

The protein localises to the nucleus. Functionally, may act as a transcriptional repressor of multidrug resistance genes. This Gibberella zeae (strain ATCC MYA-4620 / CBS 123657 / FGSC 9075 / NRRL 31084 / PH-1) (Wheat head blight fungus) protein is Protein RDR1 (RDR1).